The sequence spans 329 residues: MACIIHTNRHNDTVLSKLQKDLSKSIEIGNKKYGGGQLKTVYVYQLDESVESRPCNIPFFYGLRLAKTNADVRIERPERKELATMGKRFVGTLRDEQTVSRNQALTLLTQHKSCILSCYTGFGKTVTAINMASKIKLPTLIAVPKKPLLAQWEQEIAKFIPTATVVVVDPSKIKSLPPQPECDFCIINTCNLEKLVKHDPKFVKTFGFLIVDEAHLQMTETMAENLLHVTPRYLLGITATPYRDDGYHVLFDMFFGPEMVKIKLNKKHTVYKVKTGFCPDESRYKKKKTLFHLPSRKSIGTPYWRSRPPIRKGTGSSWTLLRASRRAPF.

Positions 105 to 259 (LTLLTQHKSC…LFDMFFGPEM (155 aa)) constitute a Helicase ATP-binding domain. ATP is bound at residue 118-125 (CYTGFGKT). Residues 212–215 (DEAH) carry the DEAH box motif.

The protein belongs to the DEAD box helicase family. DEAH subfamily.

The sequence is that of Putative helicase 109L from Invertebrate iridescent virus 3 (IIV-3).